The primary structure comprises 156 residues: Putative pre-16S rRNA nuclease (156 aa).

It belongs to the YqgF nuclease family.

The protein resides in the cytoplasm. Functionally, could be a nuclease involved in processing of the 5'-end of pre-16S rRNA. The chain is Putative pre-16S rRNA nuclease from Gloeobacter violaceus (strain ATCC 29082 / PCC 7421).